Here is a 400-residue protein sequence, read N- to C-terminus: Elongation factor Tu (400 aa).

The 200-residue stretch at 10–209 folds into the tr-type G domain; sequence KPHVNIGTIG…VVDKYIPTPQ (200 aa). The interval 19-26 is G1; it reads GHVDHGKT. 19 to 26 is a GTP binding site; it reads GHVDHGKT. A Mg(2+)-binding site is contributed by threonine 26. A G2 region spans residues 60 to 64; the sequence is GITIN. The segment at 81-84 is G3; the sequence is DCPG. Residues 81–85 and 136–139 contribute to the GTP site; these read DCPGH and NKVD. The G4 stretch occupies residues 136 to 139; it reads NKVD. The tract at residues 174 to 176 is G5; that stretch reads SAL.

This sequence belongs to the TRAFAC class translation factor GTPase superfamily. Classic translation factor GTPase family. EF-Tu/EF-1A subfamily. In terms of assembly, monomer.

It is found in the cytoplasm. The enzyme catalyses GTP + H2O = GDP + phosphate + H(+). Functionally, GTP hydrolase that promotes the GTP-dependent binding of aminoacyl-tRNA to the A-site of ribosomes during protein biosynthesis. The polypeptide is Elongation factor Tu (Caldicellulosiruptor saccharolyticus (strain ATCC 43494 / DSM 8903 / Tp8T 6331)).